Reading from the N-terminus, the 627-residue chain is Protein EXECUTER 2, chloroplastic (627 aa).

3 disordered regions span residues 1–34, 212–277, and 308–359; these read MSAA…PSAA, PTKG…AKDS, and EAEL…SKSP. Residues 1–45 constitute a chloroplast transit peptide; it reads MSAATACASPAAARPPLHIPLRSPPSAAHLPSAAASRRASSAACR. Low complexity predominate over residues 217–229; it reads SSASSVSSATAES. Acidic residues-rich tracts occupy residues 308–321 and 331–353; these read EAEL…ELVQ and SLED…SDSA.

The protein resides in the plastid. It is found in the chloroplast. In terms of biological role, together with EX1, enables higher plants to perceive singlet oxygen as a stress signal in plastid that activates a genetically determined nuclear stress response program which triggers a programmed cell death (PCD). This transfer of singlet oxygen-induced stress-related signals from the plastid to the nucleus that triggers genetically controlled PCD pathway is unique to photosynthetic eukaryotes and operates under mild stress conditions, impeding photosystem II (PSII) without causing photooxidative damage of the plant. In Oryza sativa subsp. japonica (Rice), this protein is Protein EXECUTER 2, chloroplastic.